The sequence spans 285 residues: Glutamate racemase (285 aa).

Substrate is bound by residues 28 to 29 and 60 to 61; these read DS and YG. Cys92 (proton donor/acceptor) is an active-site residue. Substrate is bound at residue 93-94; sequence NT. Cys204 serves as the catalytic Proton donor/acceptor. 205-206 contacts substrate; sequence TH.

It belongs to the aspartate/glutamate racemases family.

It carries out the reaction L-glutamate = D-glutamate. It participates in cell wall biogenesis; peptidoglycan biosynthesis. Functionally, provides the (R)-glutamate required for cell wall biosynthesis. The sequence is that of Glutamate racemase from Shigella flexneri serotype 5b (strain 8401).